Consider the following 132-residue polypeptide: Small ribosomal subunit protein uS13 (132 aa).

The disordered stretch occupies residues 106 to 132; it reads PVRGQVTQKNARTRKGPRKTVAGKKGK. Residues 116–132 are compositionally biased toward basic residues; the sequence is ARTRKGPRKTVAGKKGK.

It belongs to the universal ribosomal protein uS13 family. As to quaternary structure, part of the 30S ribosomal subunit. Forms a loose heterodimer with protein S19. Forms two bridges to the 50S subunit in the 70S ribosome.

Its function is as follows. Located at the top of the head of the 30S subunit, it contacts several helices of the 16S rRNA. In the 70S ribosome it contacts the 23S rRNA (bridge B1a) and protein L5 of the 50S subunit (bridge B1b), connecting the 2 subunits; these bridges are implicated in subunit movement. Contacts the tRNAs in the A and P-sites. The polypeptide is Small ribosomal subunit protein uS13 (Mycoplasmopsis pulmonis (strain UAB CTIP) (Mycoplasma pulmonis)).